A 300-amino-acid polypeptide reads, in one-letter code: GTPase Era (300 aa).

An Era-type G domain is found at 4–172 (KSGFVALIGR…LEKIKKLLPE (169 aa)). The interval 12 to 19 (GRPNVGKS) is G1. 12–19 (GRPNVGKS) contacts GTP. The segment at 38–42 (QTTRN) is G2. The tract at residues 59-62 (DTPG) is G3. GTP-binding positions include 59–63 (DTPGV) and 122–125 (NKAD). The segment at 122-125 (NKAD) is G4. The tract at residues 151–153 (IAA) is G5. The KH type-2 domain maps to 195–281 (IREKILLNLS…NLQLWVKVKK (87 aa)).

This sequence belongs to the TRAFAC class TrmE-Era-EngA-EngB-Septin-like GTPase superfamily. Era GTPase family. As to quaternary structure, monomer.

It localises to the cytoplasm. The protein localises to the cell membrane. In terms of biological role, an essential GTPase that binds both GDP and GTP, with rapid nucleotide exchange. Plays a role in 16S rRNA processing and 30S ribosomal subunit biogenesis and possibly also in cell cycle regulation and energy metabolism. This chain is GTPase Era, found in Caldicellulosiruptor saccharolyticus (strain ATCC 43494 / DSM 8903 / Tp8T 6331).